The chain runs to 324 residues: Holliday junction branch migration complex subunit RuvB (324 aa).

The tract at residues 1 to 168 (MEDLALRPKT…FGIVEHLEYY (168 aa)) is large ATPase domain (RuvB-L). 10 residues coordinate ATP: Tyr-14, Ile-15, Gly-48, Lys-51, Thr-52, Thr-53, Asp-97, Thr-146, Tyr-168, and Arg-205. Thr-52 is a binding site for Mg(2+). Residues 169–239 (TPEELAQGVM…RALEALAALG (71 aa)) form a small ATPAse domain (RuvB-S) region. A head domain (RuvB-H) region spans residues 242-324 (ELGLEKRDRE…PPPVGPLLEP (83 aa)). Residues Arg-297 and Arg-302 each contribute to the DNA site.

This sequence belongs to the RuvB family. As to quaternary structure, homohexamer. Forms a complex with RuvA. Electron microscopic images suggest 2 closely interacting RuvA tetramers sandwich the HJ DNA; each tetramer associates with an RuvB hexamer. Forms 2 complexes with Holliday junction (HJ) DNA which probably have 1 and 2 RuvA tetramers per complex (called complex I and complex II). Forms an RuvA(8)-RuvB(12)-Holliday junction (HJ) complex. HJ DNA is sandwiched between 2 RuvA tetramers; dsDNA enters through RuvA and exits via RuvB. An RuvB hexamer assembles on each DNA strand where it exits the tetramer. Each RuvB hexamer is contacted by two RuvA subunits (via domain III) on 2 adjacent RuvB subunits; this complex drives branch migration. In the full resolvosome a probable DNA-RuvA(4)-RuvB(12)-RuvC(2) complex forms which resolves the HJ. Requires Mg(2+) as cofactor.

Its subcellular location is the cytoplasm. It carries out the reaction ATP + H2O = ADP + phosphate + H(+). With respect to regulation, the activity of RuvB is enhanced by E.coli RuvA. The RuvA-RuvB-RuvC complex processes Holliday junction (HJ) DNA during genetic recombination and DNA repair, while the RuvA-RuvB complex plays an important role in the rescue of blocked DNA replication forks via replication fork reversal (RFR). RuvA specifically binds to HJ cruciform DNA, conferring on it an open structure. The RuvB hexamer acts as an ATP-dependent pump, pulling dsDNA into and through the RuvAB complex. RuvB forms 2 homohexamers on either side of HJ DNA bound by 1 or 2 RuvA tetramers; 4 subunits per hexamer contact DNA at a time. Coordinated motions by a converter formed by DNA-disengaged RuvB subunits stimulates ATP hydrolysis and nucleotide exchange. Immobilization of the converter enables RuvB to convert the ATP-contained energy into a lever motion, pulling 2 nucleotides of DNA out of the RuvA tetramer per ATP hydrolyzed, thus driving DNA branch migration. The RuvB motors rotate together with the DNA substrate, which together with the progressing nucleotide cycle form the mechanistic basis for DNA recombination by continuous HJ branch migration. Branch migration allows RuvC to scan DNA until it finds its consensus sequence, where it cleaves and resolves cruciform DNA. Its function is as follows. RuvB is a Mg(2+)-dependent, DNA-dependent ATPase with an equal preference for supercoiled and linear dsDNA; all (d)NTPs tested were efficiently hydrolyzed. Promotes Holliday junction (HJ) dissociation at 60 degrees Celsius in the presence of ATP but not ATP-gamma-S or ADP; (d)ATP, (d)CTP and dTTP also power dissociation in the absence of any RuvA. RuvA stimulates the ATPase of RuvB in the presence of dsDNA and HJ branch migration by RuvB. Excess RuvB stimulates some branch migration in vitro even in the presence of mutant RuvA. In Thermus thermophilus (strain ATCC 27634 / DSM 579 / HB8), this protein is Holliday junction branch migration complex subunit RuvB.